A 274-amino-acid chain; its full sequence is Tryptophan synthase alpha chain (274 aa).

Active-site proton acceptor residues include glutamate 49 and aspartate 60.

The protein belongs to the TrpA family. As to quaternary structure, tetramer of two alpha and two beta chains.

It catalyses the reaction (1S,2R)-1-C-(indol-3-yl)glycerol 3-phosphate + L-serine = D-glyceraldehyde 3-phosphate + L-tryptophan + H2O. It participates in amino-acid biosynthesis; L-tryptophan biosynthesis; L-tryptophan from chorismate: step 5/5. In terms of biological role, the alpha subunit is responsible for the aldol cleavage of indoleglycerol phosphate to indole and glyceraldehyde 3-phosphate. This Alkalilimnicola ehrlichii (strain ATCC BAA-1101 / DSM 17681 / MLHE-1) protein is Tryptophan synthase alpha chain.